A 307-amino-acid polypeptide reads, in one-letter code: MNYLEFEVIWGVNNIYSILELKSKLIYEGIFKGKVLETGCKEYSPLVPGDIVLGYIYGSRKVYIDKRASRKNILWRYNRKADLRQTIVSNIDNILIVNSANFPEMKNFFIDRVLVVAEEQNIVPIIVINKIDKGISQRVEEFSEIYKNLGYKVLKTSVKTFEGIKEIKEVLRNSRTSFIGQSGVGKSSLINLIDSKASQSVNEISHKYSRGKHTTVYAISFYSESGIIVDTPGIKEFGIETLPFENLRYYFKEFENFASLCKYKSCLHVSEPCCSVISSLGNGISKLRYESYLKILSELKNYKNYAR.

Residues 80 to 237 (KADLRQTIVS…IVDTPGIKEF (158 aa)) enclose the CP-type G domain. Residues 129-132 (NKID) and 180-188 (GQSGVGKSS) contribute to the GTP site. 4 residues coordinate Zn(2+): Cys261, Cys266, His268, and Cys274.

This sequence belongs to the TRAFAC class YlqF/YawG GTPase family. RsgA subfamily. In terms of assembly, monomer. Associates with 30S ribosomal subunit, binds 16S rRNA. Zn(2+) is required as a cofactor.

It is found in the cytoplasm. In terms of biological role, one of several proteins that assist in the late maturation steps of the functional core of the 30S ribosomal subunit. Helps release RbfA from mature subunits. May play a role in the assembly of ribosomal proteins into the subunit. Circularly permuted GTPase that catalyzes slow GTP hydrolysis, GTPase activity is stimulated by the 30S ribosomal subunit. The sequence is that of Small ribosomal subunit biogenesis GTPase RsgA from Borreliella afzelii (strain PKo) (Borrelia afzelii).